The following is a 61-amino-acid chain: Lens epithelial cell protein LEP503 (61 aa).

Restricted to lens epithelial cells.

In terms of biological role, may play a role in lens epithelial cell differentiation. The polypeptide is Lens epithelial cell protein LEP503 (LENEP) (Homo sapiens (Human)).